A 259-amino-acid chain; its full sequence is Ribonuclease PH (259 aa).

Residues arginine 88 and 126–128 (GTR) each bind phosphate.

It belongs to the RNase PH family. Homohexameric ring arranged as a trimer of dimers.

The catalysed reaction is tRNA(n+1) + phosphate = tRNA(n) + a ribonucleoside 5'-diphosphate. Functionally, phosphorolytic 3'-5' exoribonuclease that plays an important role in tRNA 3'-end maturation. Removes nucleotide residues following the 3'-CCA terminus of tRNAs; can also add nucleotides to the ends of RNA molecules by using nucleoside diphosphates as substrates, but this may not be physiologically important. Probably plays a role in initiation of 16S rRNA degradation (leading to ribosome degradation) during starvation. The protein is Ribonuclease PH of Mycobacterium leprae (strain Br4923).